A 90-amino-acid polypeptide reads, in one-letter code: Probable Fe(2+)-trafficking protein (90 aa).

The protein belongs to the Fe(2+)-trafficking protein family.

In terms of biological role, could be a mediator in iron transactions between iron acquisition and iron-requiring processes, such as synthesis and/or repair of Fe-S clusters in biosynthetic enzymes. In Xylella fastidiosa (strain M23), this protein is Probable Fe(2+)-trafficking protein.